Here is a 202-residue protein sequence, read N- to C-terminus: Alcohol dehydrogenase-related 31 kDa protein (202 aa).

Residue 11–34 (YVADCGGIALETSKVLMTKNIAKL) coordinates NAD(+). Ser139 contacts substrate. Tyr152 functions as the Proton acceptor in the catalytic mechanism.

Belongs to the short-chain dehydrogenases/reductases (SDR) family.

The chain is Alcohol dehydrogenase-related 31 kDa protein (Adhr) from Drosophila erecta (Fruit fly).